Consider the following 988-residue polypeptide: Chloride channel protein 1 (988 aa).

Over 1-118 (MEQSRSQQRG…VVRRKLGEDG (118 aa)) the chain is Cytoplasmic. Residues 65–75 (HKEQFSDREQD) show a composition bias toward basic and acidic residues. The tract at residues 65–92 (HKEQFSDREQDIGMPKKTGSSSTVDSKD) is disordered. A helical membrane pass occupies residues 119-150 (IFLVLLGLLMALVSWSMDYVSAKSLQAYKWSY). The Extracellular portion of the chain corresponds to 151–158 (AQMQPSLP). The helical transmembrane segment at 159-179 (LQFLVWVTFPLVLILFSALFC) threads the bilayer. Over 180–183 (HLIS) the chain is Cytoplasmic. Positions 184 to 189 (PQAVGS) form an intramembrane region, note=Loop between two helices. Residues 188–192 (GSGIP) carry the Selectivity filter part_1 motif. Residue S189 participates in chloride binding. Positions 190–195 (GIPEMK) form an intramembrane region, helical. At 196 to 208 (TILRGVVLKEYLT) the chain is on the cytoplasmic side. Positions 209–224 (MKAFVAKVVALTAGLG) form an intramembrane region, helical. The note=Loop between two helices intramembrane region spans 225–230 (SGIPVG). The short motif at 230–234 (GKEGP) is the Selectivity filter part_2 element. The segment at residues 231-246 (KEGPFVHIASICAAVL) is an intramembrane region (helical). Over 247–268 (SKFMSVFCGVYEQPYYYSDILT) the chain is Cytoplasmic. Intramembrane regions (helical) lie at residues 269–280 (VGCAVGVGCCFG) and 281–290 (TPLGGVLFSI). Residues 291–301 (EVTSTYFAVRN) lie on the Cytoplasmic side of the membrane. Residues 302–321 (YWRGFFAATFSAFVFRVLAV) form a helical membrane-spanning segment. Over 322 to 347 (WNKDAVTITALFRTNFRMDFPFDLKE) the chain is Extracellular. A helical transmembrane segment spans residues 348–376 (LPAFAAIGICCGLLGAVFVYLHRQVMLGV). The Cytoplasmic segment spans residues 377–390 (RKHKALSQFLAKHR). The chain crosses the membrane as a helical span at residues 391–408 (LLYPGIVTFVIASFTFPP). The Extracellular segment spans residues 409 to 414 (GMGQFM). The note=Loop between two helices intramembrane region spans 415-418 (AGEL). Residues 419–426 (MPREAIST) constitute an intramembrane region (helical). At 427-457 (LFDNNTWVKHAGDPESLGQSAVWIHPRVNVV) the chain is on the extracellular side. Positions 458 to 475 (IIIFLFFVMKFWMSIVAT) form an intramembrane region, helical. Positions 476 to 482 (TMPIPCG) form an intramembrane region, note=Loop between two helices. Positions 482–486 (GGFMP) match the Selectivity filter part_3 motif. The helical intramembrane region spans 483-498 (GFMPVFVLGAAFGRLV). Residue F484 coordinates chloride. Topologically, residues 499–521 (GEIMAMLFPDGILFDDIIYKILP) are extracellular. The helical intramembrane region spans 522-538 (GGYAVIGAAALTGAVSH). The note=Loop between two helices intramembrane region spans 539–540 (TV). The segment at residues 541–554 (STAVICFELTGQIA) is an intramembrane region (helical). At 555 to 557 (HIL) the chain is on the extracellular side. Positions 558 to 571 (PMMVAVILANMVAQ) form an intramembrane region, helical. The segment at residues 572–575 (SLQP) is an intramembrane region (note=Loop between two helices). The helical intramembrane region spans 576-578 (SLY). A chloride-binding site is contributed by Y578. Residues 579–988 (DSIIQVKKLP…DEEDEDELIL (410 aa)) are Cytoplasmic-facing. Positions 609-668 (MVRDVKFVSASYTYGELRTLLQTTTVKTLPLVDSKDSMILLGSVERSELQALLQRHLCPE) constitute a CBS 1 domain. The segment at 713–764 (EDEDEDLSGKSELPPSLALHPSTTAPLSPEEPNGPLPGHKQQPEAPEPAGQR) is disordered. The CBS 2 domain maps to 821–876 (IDQSPFQLVEQTTLHKTHTLFSLLGLHLAYVTSMGKLRGVLALEELQKAIEGHTKS). The tract at residues 880 to 988 (LRPPLASFRN…DEEDEDELIL (109 aa)) is disordered. At S886 the chain carries Phosphoserine. The span at 887–906 (FRNTTSTRKSTGAPPSSAEN) shows a compositional bias: polar residues. Residues 929–941 (TPVPSPSPEPPLS) are compositionally biased toward pro residues. Composition is skewed to acidic residues over residues 950–967 (ELEE…EELA) and 979–988 (DEEDEDELIL).

The protein belongs to the chloride channel (TC 2.A.49) family. ClC-1/CLCN1 subfamily. As to quaternary structure, homodimer. As to expression, predominantly expressed in skeletal muscles.

It localises to the cell membrane. It is found in the sarcolemma. The protein localises to the T-tubule. The enzyme catalyses chloride(in) = chloride(out). It catalyses the reaction thiocyanate(in) = thiocyanate(out). The catalysed reaction is bromide(in) = bromide(out). It carries out the reaction nitrate(in) = nitrate(out). The enzyme catalyses iodide(out) = iodide(in). Modulated by membrane voltage with depolarization favouring channel opening and hyperpolarization favouring channel closure. Inhibited by acidic pH and ATP binding due to a shift of voltage dependence of common gating to more positive voltages. Inhibited by 9-anthracene-carboxylic. Its function is as follows. Voltage-gated chloride channel involved in skeletal muscle excitability. Generates most of the plasma membrane chloride conductance in skeletal muscle fibers, stabilizes the resting membrane potential and contributes to the repolarization phase during action potential firing. Forms a homodimeric channel where each subunit has its own ion conduction pathway. Conducts double-barreled currents controlled by two types of gates, two fast glutamate gates that control each subunit independently and a slow common gate that opens and shuts off both subunits simultaneously. Has a significant open probability at muscle resting potential and is further activated upon membrane depolarization. Permeable to small monovalent anions with ion selectivity for chloride &gt; thiocyanate &gt; bromide &gt; nitrate &gt; iodide. The chain is Chloride channel protein 1 from Homo sapiens (Human).